We begin with the raw amino-acid sequence, 351 residues long: Circumsporozoite protein (351 aa).

The first 22 residues, 1–22 (MKNFILLAVSSILLVDLLPTHF), serve as a signal peptide directing secretion. The tract at residues 50-266 (AQVRQSASRG…GQNNQGANVP (217 aa)) is disordered. Basic and acidic residues predominate over residues 61–96 (GLGEKPKEGADKEKKKEKEKEKEEEPKKPNENKLKQ). Residues 80–88 (KEKEEEPKK) form a required for the binding to heparan sulfate proteoglycans (HSPGs) on the surface of host hepatocytes region. A region I; contains the proteolytic cleavage site region spans residues 93 to 97 (KLKQP). A compositionally biased stretch (low complexity) spans 97–219 (PEQPAAGAGG…AGARGEQPAA (123 aa)). A run of 14 repeats spans residues 101–109 (AAGAGGEQP), 110–118 (AAGAGGEQP), 119–127 (AAGAGGEQP), 128–136 (AAGARGEQP), 137–145 (AAGAGGEQP), 146–154 (AAGAGGEQP), 155–163 (AAGAGGEQP), 164–172 (AAGAGGEQP), 173–181 (AAGAGGEQP), 182–190 (AAGARGEQP), 191–199 (AAGAGGEQP), 200–208 (AAGAGGEQP), 209–217 (AAGARGEQP), and 218–226 (AAGAGGEQP). The tract at residues 101-226 (AAGAGGEQPA…PAAGAGGEQP (126 aa)) is 14 X 9 AA tandem repeats of A-A-G-A-[GR]-G-E-Q-P. A compositionally biased stretch (gly residues) spans 244–256 (GARGGNAGAGKGQ). The 53-residue stretch at 277–329 (KIRSSVTTEWTPCSVTCGNGVRIRRKGHAGNKKAEDLTMDDLEVEACVMDKCA) folds into the TSP type-1 domain. Cystine bridges form between Cys-289–Cys-323 and Cys-293–Cys-328. A glycan (O-linked (Fuc) threonine) is linked at Thr-292. A lipid anchor (GPI-anchor amidated cysteine) is attached at Cys-328. The propeptide at 329 to 351 (AGIFNVVSNSLGLVILLVLALFN) is removed in mature form.

This sequence belongs to the plasmodium circumsporozoite protein family. During host cell invasion, proteolytically cleaved at the cell membrane in the region I by a papain-like cysteine protease of parasite origin. Cleavage is triggered by the sporozoite contact with highly sulfated heparan sulfate proteoglycans (HSPGs) present on the host hepatocyte cell surface. Cleavage exposes the TSP type-1 (TSR) domain and is required for productive invasion of host hepatocytes but not for adhesion to the host cell membrane. Cleavage is dispensable for sporozoite development in the oocyst, motility and for traversal of host and vector cells. In terms of processing, O-glycosylated; maybe by POFUT2.

It is found in the cell membrane. The protein localises to the cytoplasm. In terms of biological role, essential sporozoite protein. In the mosquito vector, required for sporozoite development in the oocyst, migration through the vector hemolymph and entry into the vector salivary glands. In the vertebrate host, required for sporozoite migration through the host dermis and infection of host hepatocytes. Binds to highly sulfated heparan sulfate proteoglycans (HSPGs) on the surface of host hepatocytes. Its function is as follows. In the vertebrate host, binds to highly sulfated heparan sulfate proteoglycans (HSPGs) on the surface of host hepatocytes and is required for sporozoite invasion of the host hepatocytes. The sequence is that of Circumsporozoite protein from Plasmodium knowlesi (strain nuri).